Reading from the N-terminus, the 160-residue chain is Ubiquitin-like protein 4A (160 aa).

The Ubiquitin-like domain occupies 1–76 (MQLTVKALQG…LNLVVKPLEK (76 aa)). Lys48 is covalently cross-linked (Glycyl lysine isopeptide (Lys-Gly) (interchain with G-Cter in ubiquitin)). The tract at residues 99–141 (WQLIAKVLARHFSAADASRVLDQLQRDYERSLSRLTLDDIERL) is required and sufficient for interaction with BAG6.

As to quaternary structure, component of the BAG6/BAT3 complex, at least composed of BAG6, UBL4A and GET4/TRC35. Interacts with BAG6; the interaction is direct and required for UBL4A protein stability. Interacts with USP13; may be indirect via BAG6. Polyubiquitinated. Ubiquitination by AMFR and deubiquitination by USP13 may regulate the interaction between the BAG6/BAT complex and SGTA and therefore may regulate client proteins fate.

It localises to the cytoplasm. Its subcellular location is the cytosol. The protein localises to the nucleus. As part of a cytosolic protein quality control complex, the BAG6/BAT3 complex, maintains misfolded and hydrophobic patches-containing proteins in a soluble state and participates in their proper delivery to the endoplasmic reticulum or alternatively can promote their sorting to the proteasome where they undergo degradation. The BAG6/BAT3 complex is involved in the post-translational delivery of tail-anchored/type II transmembrane proteins to the endoplasmic reticulum membrane. Recruited to ribosomes, it interacts with the transmembrane region of newly synthesized tail-anchored proteins and together with SGTA and ASNA1 mediates their delivery to the endoplasmic reticulum. Client proteins that cannot be properly delivered to the endoplasmic reticulum are ubiquitinated and sorted to the proteasome. Similarly, the BAG6/BAT3 complex also functions as a sorting platform for proteins of the secretory pathway that are mislocalized to the cytosol either delivering them to the proteasome for degradation or to the endoplasmic reticulum. The BAG6/BAT3 complex also plays a role in the endoplasmic reticulum-associated degradation (ERAD), a quality control mechanism that eliminates unwanted proteins of the endoplasmic reticulum through their retrotranslocation to the cytosol and their targeting to the proteasome. It maintains these retrotranslocated proteins in an unfolded yet soluble state condition in the cytosol to ensure their proper delivery to the proteasome. This is Ubiquitin-like protein 4A (UBL4A) from Rhinolophus ferrumequinum (Greater horseshoe bat).